An 894-amino-acid chain; its full sequence is Microsomal triglyceride transfer protein large subunit (894 aa).

The signal sequence occupies residues 1–21; sequence MILLAVLFLCFFSSYSASVKG. The 631-residue stretch at 28–658 folds into the Vitellogenin domain; that stretch reads LNNERLYKLT…IFQYIGKAEL (631 aa). Cys174 and Cys194 are oxidised to a cystine.

In terms of assembly, interacts with PRAP1. Heterodimer; heterodimerizes with the protein disulfide isomerase (P4HB/PDI). Interacts with APOB. As to quaternary structure, heterodimer; heterodimerizes with the protein disulfide isomerase (P4HB/PDI). Cleaved by signal peptidase between residues Gln-33 and Asn-34. As to expression, mainly expressed in the intestine and the liver, and at lower levels in white and brown fat cells. Expressed in heart. In terms of tissue distribution, ubiquitous, and is the major isoform in hematopoietic cells and adipocytes.

The protein localises to the endoplasmic reticulum. It is found in the golgi apparatus. It catalyses the reaction a 1,2-diacyl-sn-glycero-3-phosphocholine(in) = a 1,2-diacyl-sn-glycero-3-phosphocholine(out). The catalysed reaction is a 1,2-diacyl-sn-glycero-3-phosphoethanolamine(in) = a 1,2-diacyl-sn-glycero-3-phosphoethanolamine(out). The enzyme catalyses a cholesterol ester(in) = a cholesterol ester(out). It carries out the reaction a triacyl-sn-glycerol(in) = a triacyl-sn-glycerol(out). Its function is as follows. Catalyzes the transport of triglyceride, cholesteryl ester, and phospholipid between phospholipid surfaces. Required for the assembly and secretion of plasma lipoproteins that contain apolipoprotein B. May be involved in regulating cholesteryl ester biosynthesis in cells that produce lipoproteins. In terms of biological role, critical for the development of natural killer T (NKT) cells. Required for the assembly and secretion of plasma lipoproteins that contain apolipoprotein B. The chain is Microsomal triglyceride transfer protein large subunit (Mttp) from Mus musculus (Mouse).